The following is a 192-amino-acid chain: Flavin prenyltransferase UbiX (192 aa).

Residues 10 to 12, Ser36, 92 to 95, and Arg127 contribute to the FMN site; these read GAS and SMTT. Positions 157 and 173 each coordinate dimethylallyl phosphate.

The protein belongs to the UbiX/PAD1 family.

It carries out the reaction dimethylallyl phosphate + FMNH2 = prenylated FMNH2 + phosphate. Flavin prenyltransferase that catalyzes the synthesis of the prenylated FMN cofactor (prenyl-FMN) for 4-hydroxy-3-polyprenylbenzoic acid decarboxylase UbiD. The prenyltransferase is metal-independent and links a dimethylallyl moiety from dimethylallyl monophosphate (DMAP) to the flavin N5 and C6 atoms of FMN. The sequence is that of Flavin prenyltransferase UbiX from Chlamydia pneumoniae (Chlamydophila pneumoniae).